A 244-amino-acid chain; its full sequence is Mediator of RNA polymerase II transcription subunit 9 (244 aa).

Residues 1–10 (MDQFSGGGGN) show a composition bias toward gly residues. Disordered stretches follow at residues 1-28 (MDQF…TPTN) and 96-131 (QQRL…HTPQ). Over residues 13-28 (MIPNVQAQGNFGTPTN) the composition is skewed to polar residues. Low complexity-rich tracts occupy residues 96–111 (QQRL…QSLQ) and 122–131 (TPQSMMHTPQ). The stretch at 212-239 (KRNVEESEQLLQQRRDLIVEYRKSIEEI) forms a coiled coil.

It belongs to the plant Mediator complex subunit 9 family. Component of the Mediator complex. Interacts with MEE14/CBP1.

It localises to the nucleus. In terms of biological role, component of the Mediator complex, a coactivator involved in the regulated transcription of nearly all RNA polymerase II-dependent genes. Mediator functions as a bridge to convey information from gene-specific regulatory proteins to the basal RNA polymerase II transcription machinery. The Mediator complex, having a compact conformation in its free form, is recruited to promoters by direct interactions with regulatory proteins and serves for the assembly of a functional pre-initiation complex with RNA polymerase II and the general transcription factors. The polypeptide is Mediator of RNA polymerase II transcription subunit 9 (MED9) (Arabidopsis thaliana (Mouse-ear cress)).